A 180-amino-acid chain; its full sequence is Large ribosomal subunit protein uL5 (180 aa).

This sequence belongs to the universal ribosomal protein uL5 family. In terms of assembly, part of the 50S ribosomal subunit; part of the 5S rRNA/L5/L18/L25 subcomplex. Contacts the 5S rRNA and the P site tRNA. Forms a bridge to the 30S subunit in the 70S ribosome.

This is one of the proteins that bind and probably mediate the attachment of the 5S RNA into the large ribosomal subunit, where it forms part of the central protuberance. In the 70S ribosome it contacts protein S13 of the 30S subunit (bridge B1b), connecting the 2 subunits; this bridge is implicated in subunit movement. Contacts the P site tRNA; the 5S rRNA and some of its associated proteins might help stabilize positioning of ribosome-bound tRNAs. In Streptococcus sanguinis (strain SK36), this protein is Large ribosomal subunit protein uL5.